Reading from the N-terminus, the 266-residue chain is Thymidylate synthase (266 aa).

Arg24 contacts dUMP. His54 contacts (6R)-5,10-methylene-5,6,7,8-tetrahydrofolate. DUMP is bound at residue 129-130; sequence RR. Residue Cys149 is the Nucleophile of the active site. Residues 169–172, Asn180, and 210–212 each bind dUMP; these read RSAD and HIY. Residue Asp172 participates in (6R)-5,10-methylene-5,6,7,8-tetrahydrofolate binding. Ala265 contributes to the (6R)-5,10-methylene-5,6,7,8-tetrahydrofolate binding site.

This sequence belongs to the thymidylate synthase family. Bacterial-type ThyA subfamily. As to quaternary structure, homodimer.

The protein localises to the cytoplasm. The enzyme catalyses dUMP + (6R)-5,10-methylene-5,6,7,8-tetrahydrofolate = 7,8-dihydrofolate + dTMP. It participates in pyrimidine metabolism; dTTP biosynthesis. Its function is as follows. Catalyzes the reductive methylation of 2'-deoxyuridine-5'-monophosphate (dUMP) to 2'-deoxythymidine-5'-monophosphate (dTMP) while utilizing 5,10-methylenetetrahydrofolate (mTHF) as the methyl donor and reductant in the reaction, yielding dihydrofolate (DHF) as a by-product. This enzymatic reaction provides an intracellular de novo source of dTMP, an essential precursor for DNA biosynthesis. The polypeptide is Thymidylate synthase (Mycolicibacterium smegmatis (strain ATCC 700084 / mc(2)155) (Mycobacterium smegmatis)).